A 392-amino-acid polypeptide reads, in one-letter code: Enoyl-[acyl-carrier-protein] reductase [NADH] (392 aa).

Residues 46 to 51 (GSSSGY), 72 to 73 (LE), 108 to 109 (DA), and 136 to 137 (VA) contribute to the NAD(+) site. Tyrosine 225 contacts substrate. Catalysis depends on tyrosine 235, which acts as the Proton donor. NAD(+)-binding positions include lysine 244 and 273 to 275 (LVT).

The protein belongs to the TER reductase family. Monomer.

It carries out the reaction a 2,3-saturated acyl-[ACP] + NAD(+) = a (2E)-enoyl-[ACP] + NADH + H(+). Its pathway is lipid metabolism; fatty acid biosynthesis. Functionally, involved in the final reduction of the elongation cycle of fatty acid synthesis (FAS II). Catalyzes the reduction of a carbon-carbon double bond in an enoyl moiety that is covalently linked to an acyl carrier protein (ACP). In Streptomyces avermitilis (strain ATCC 31267 / DSM 46492 / JCM 5070 / NBRC 14893 / NCIMB 12804 / NRRL 8165 / MA-4680), this protein is Enoyl-[acyl-carrier-protein] reductase [NADH].